An 84-amino-acid chain; its full sequence is MRYAIVFFLVCVITLGEALKCVNLQANGIKMTQECAKEDTKCLTLRSLKKTLKFCASGRTCTTMKIMSLPGEQITCCEGNMCNA.

A signal peptide spans 1–18 (MRYAIVFFLVCVITLGEA). 4 disulfide bridges follow: cysteine 21–cysteine 42, cysteine 35–cysteine 55, cysteine 61–cysteine 76, and cysteine 77–cysteine 82.

Expressed by the skin dorsal glands.

The protein localises to the secreted. Lacks alpha-neurotoxic activity, has apparently no antibacterial activity, nor anti-coagulant potency. The protein is Xenoxin-1 (xenoxin-1) of Xenopus laevis (African clawed frog).